The sequence spans 399 residues: MNIKSIKDLDLKPGNSVFIRCDFNVPLDEYGNITDDRRIREALPTIRYCLDNDCKIVLGSHLGRPKGFDEKYSLKPVAKRLHTLLKQDIIMAQDVVGEDAKAKFTKLQPGEILLLENLRFEPGETKNDEEFAKKLSQFGEFYVNDAFGVSHRAHASVEAITRFYDQDHKAAGFLLLKEIKYLYKILENPTRPFMAIVGGSKVSGKLGALINLLPKVDKLIIGGAMAFTFLKALGYEVGKSLVEDDLIEEAKNILNQAKNNGVKLYLPVDFVVAPELDPNAPVKYVTFQEIPKTWMGLDIGPASTRLFKEALDEVQTIIWNGPMGVFEIDKFARGSIKLANFVAESFATKIIGGGDTASLISKAGVVDEMTFISTGGGASLELLEGKELPGIKALEVGAS.

Substrate-binding positions include 22–24, R38, 61–64, R119, and R152; these read DFN and HLGR. Residues K205, G296, E327, and 353–356 contribute to the ATP site; that span reads GGDT.

The protein belongs to the phosphoglycerate kinase family. In terms of assembly, monomer.

It is found in the cytoplasm. It carries out the reaction (2R)-3-phosphoglycerate + ATP = (2R)-3-phospho-glyceroyl phosphate + ADP. Its pathway is carbohydrate degradation; glycolysis; pyruvate from D-glyceraldehyde 3-phosphate: step 2/5. This is Phosphoglycerate kinase from Nitratiruptor sp. (strain SB155-2).